The sequence spans 149 residues: Large ribosomal subunit protein eL19 (149 aa).

Residues Lys67 to Arg90 are disordered.

Belongs to the eukaryotic ribosomal protein eL19 family. In terms of assembly, part of the 50S ribosomal subunit.

Functionally, binds to the 23S rRNA. The protein is Large ribosomal subunit protein eL19 of Archaeoglobus fulgidus (strain ATCC 49558 / DSM 4304 / JCM 9628 / NBRC 100126 / VC-16).